A 415-amino-acid polypeptide reads, in one-letter code: MELRVGNRYRLGRKIGSGSFGDIYLGTDIAASEEVAIKLECVKTKHPQLHIESKIYKMMQGGVGIPTIKWCGAEGDYNVMVMELLGPSLEDLFNFCSRKFSLKTVLLLADQMISRIEYIHSKNFIHRDVKPDNFLMGLGKKGNLVYIIDFGLAKKYRDARTHQHIPYRENKNLTGTARYASINTHLGIEQSRRDDLESLGYVLMYFNLGSLPWQGLKAATKRQKYERISEKKMSTPIEVLCKGYPSEFATYLNFCRSLRFDDKPDYSYLRQLFRNLFHRQGFSYDYVFDWNMLKFGASRAAEDAERERREREERLRHTRNPAVRGLPSTASGRLRGTQEVTPSTPLTPTSHTANTSPRPVSGMERERKVSMRLHRGAPVNVSSSDLTSRQDTSRMSTSQIPSRVTSSGLPSTVHR.

The region spanning 9 to 277 (YRLGRKIGSG…YLRQLFRNLF (269 aa)) is the Protein kinase domain. Residues 15–23 (IGSGSFGDI) and lysine 38 contribute to the ATP site. Aspartate 128 serves as the catalytic Proton acceptor. Positions 301–315 (AEDAERERREREERL) are enriched in basic and acidic residues. The interval 301 to 415 (AEDAERERRE…SSGLPSTVHR (115 aa)) is disordered. Residues 317–342 (HTRNPAVRGLPSTASGRLRGTQEVTP) are autoinhibitory. Residues 341-352 (TPSTPLTPTSHT) show a composition bias toward low complexity. Polar residues predominate over residues 380–415 (NVSSSDLTSRQDTSRMSTSQIPSRVTSSGLPSTVHR).

Belongs to the protein kinase superfamily. In terms of assembly, monomer. Interacts with per1 and per2. Component of the circadian core oscillator. Post-translationally, autophosphorylated on serine and threonine residues. As to expression, detected in retina photoreceptor cells.

Its subcellular location is the cytoplasm. The protein resides in the nucleus. The catalysed reaction is L-seryl-[protein] + ATP = O-phospho-L-seryl-[protein] + ADP + H(+). It catalyses the reaction L-threonyl-[protein] + ATP = O-phospho-L-threonyl-[protein] + ADP + H(+). The enzyme catalyses L-seryl-[tau protein] + ATP = O-phospho-L-seryl-[tau protein] + ADP + H(+). It carries out the reaction L-threonyl-[tau protein] + ATP = O-phospho-L-threonyl-[tau protein] + ADP + H(+). Its activity is regulated as follows. Exhibits substrate-dependent heparin activation. In terms of biological role, casein kinases are operationally defined by their preferential utilization of acidic proteins such as caseins as substrates. Can phosphorylate a large number of proteins. Central component of the circadian clock. May act as a negative regulator of circadian rhythmicity by phosphorylating per1 and per2, which may lead to their degradation. Participates in wnt signaling. Functionally, has no kinase activity. The chain is Casein kinase I isoform delta (csnk1d) from Xenopus laevis (African clawed frog).